Here is a 328-residue protein sequence, read N- to C-terminus: GTPase Obg (328 aa).

An Obg domain is found at 1-159 (MNFIDEVKIY…MWVQLSLKLL (159 aa)). The OBG-type G domain occupies 160–327 (SDVGLVGLPN…IIKLALQTIK (168 aa)). Residues 166–173 (GLPNAGKS), 191–195 (FTTLV), 212–215 (DIPG), 279–282 (NKID), and 308–310 (STY) each bind GTP. Mg(2+) contacts are provided by Ser173 and Thr193.

Belongs to the TRAFAC class OBG-HflX-like GTPase superfamily. OBG GTPase family. In terms of assembly, monomer. It depends on Mg(2+) as a cofactor.

It localises to the cytoplasm. In terms of biological role, an essential GTPase which binds GTP, GDP and possibly (p)ppGpp with moderate affinity, with high nucleotide exchange rates and a fairly low GTP hydrolysis rate. Plays a role in control of the cell cycle, stress response, ribosome biogenesis and in those bacteria that undergo differentiation, in morphogenesis control. The sequence is that of GTPase Obg from Rickettsia bellii (strain RML369-C).